We begin with the raw amino-acid sequence, 122 residues long: Cofilin/actin-depolymerizing factor homolog 1 (122 aa).

Positions 4 to 122 (GIRVNDNCVT…ESAQDVADLK (119 aa)) constitute an ADF-H domain.

This sequence belongs to the actin-binding proteins ADF family. Interacts with monomeric actin, does not bind to actin polymers.

The protein resides in the cytoplasm. The protein localises to the cytoskeleton. In terms of biological role, not involved in actin polymerisation, instead functions to stimulate nucleotide exchange on monomeric actin and influence turnover of the small amount of cytosolic actin microfilaments. Essential for erythrocytic schizogony. The polypeptide is Cofilin/actin-depolymerizing factor homolog 1 (Plasmodium falciparum (isolate 3D7)).